We begin with the raw amino-acid sequence, 338 residues long: Pyridoxal 5'-phosphate synthase subunit PdxS (338 aa).

Asp-66 provides a ligand contact to D-ribose 5-phosphate. Catalysis depends on Lys-123, which acts as the Schiff-base intermediate with D-ribose 5-phosphate. Gly-195 contacts D-ribose 5-phosphate. Lys-207 is a D-glyceraldehyde 3-phosphate binding site. D-ribose 5-phosphate contacts are provided by residues Gly-256 and 277–278; that span reads GS.

Belongs to the PdxS/SNZ family. In the presence of PdxT, forms a dodecamer of heterodimers.

It catalyses the reaction aldehydo-D-ribose 5-phosphate + D-glyceraldehyde 3-phosphate + L-glutamine = pyridoxal 5'-phosphate + L-glutamate + phosphate + 3 H2O + H(+). Its pathway is cofactor biosynthesis; pyridoxal 5'-phosphate biosynthesis. In terms of biological role, catalyzes the formation of pyridoxal 5'-phosphate from ribose 5-phosphate (RBP), glyceraldehyde 3-phosphate (G3P) and ammonia. The ammonia is provided by the PdxT subunit. Can also use ribulose 5-phosphate and dihydroxyacetone phosphate as substrates, resulting from enzyme-catalyzed isomerization of RBP and G3P, respectively. This chain is Pyridoxal 5'-phosphate synthase subunit PdxS, found in Saccharolobus islandicus (strain Y.N.15.51 / Yellowstone #2) (Sulfolobus islandicus).